Here is a 240-residue protein sequence, read N- to C-terminus: Phosphoribosylaminoimidazole-succinocarboxamide synthase (240 aa).

This sequence belongs to the SAICAR synthetase family.

It carries out the reaction 5-amino-1-(5-phospho-D-ribosyl)imidazole-4-carboxylate + L-aspartate + ATP = (2S)-2-[5-amino-1-(5-phospho-beta-D-ribosyl)imidazole-4-carboxamido]succinate + ADP + phosphate + 2 H(+). It participates in purine metabolism; IMP biosynthesis via de novo pathway; 5-amino-1-(5-phospho-D-ribosyl)imidazole-4-carboxamide from 5-amino-1-(5-phospho-D-ribosyl)imidazole-4-carboxylate: step 1/2. In Wolbachia pipientis wMel, this protein is Phosphoribosylaminoimidazole-succinocarboxamide synthase.